The following is a 369-amino-acid chain: Zeaxanthin 7,8(7',8')-cleavage dioxygenase, chromoplastic (369 aa).

The Fe cation site is built by His-62, His-112, His-177, and His-356.

It belongs to the carotenoid oxygenase family. It depends on Fe(2+) as a cofactor. In terms of tissue distribution, in the style branches.

Its subcellular location is the plastid. It localises to the chromoplast. The catalysed reaction is all-trans-zeaxanthin + 2 O2 = crocetin dialdehyde + 2 3beta-hydroxy-beta-cyclocitral. Functionally, cleaves zeaxanthin symmetrically at the 7-8 and 7'-8' double bonds to produce crocetin dialdehyde and hydroxy-beta-cyclocitral, two water-soluble precursors sequestred in vacuoles and involved in the synthesis of saffron pigment and aroma. The sequence is that of Zeaxanthin 7,8(7',8')-cleavage dioxygenase, chromoplastic (ZCD) from Crocus sativus (Saffron).